Consider the following 685-residue polypeptide: E3 ubiquitin ligase Rnf157 (685 aa).

A lipid anchor (N-myristoyl glycine) is attached at glycine 2. An RING-type zinc finger spans residues 276–315; the sequence is ECVVCLSDVRDTLILPCRHLCLCNTCADTLRYQANNCPIC. The D-box 1 signature appears at 329 to 332; the sequence is RKKL. Disordered regions lie at residues 339–361, 433–584, and 650–672; these read SFNP…ENIP, LSKS…AGEQ, and LGGR…EASA. Positions 434-443 are enriched in low complexity; sequence SKSISQNSSV. The segment covering 478–537 has biased composition (polar residues); it reads ESENLTLSSSGAVDQSSCTGTPLSSTISSPEDPASSSLAQSVMSMASSQISTDTVSSMSG. A compositionally biased stretch (low complexity) spans 552-561; the sequence is PSPRAASRAP. The D-box 2 signature appears at 657 to 660; it reads ARPR.

In terms of assembly, interacts with APBB1. Interacts with CHD1; CHD1-binding controls RNF157 stability. Also interacts with ATRN, MEGF8, TECR, MSI2, PLRG1, BYSL, MTERF3, PSMA1, MRPS18B, PRPF4, FASTKD2, SLC25A1, SMU1, CNOT9, MRPS2, MAGT1, FXR2, EMD, PSMD8, HDAC1, RAN, HSD17B12, TXNDC5 and MRPL19.

The protein localises to the cytoplasm. It carries out the reaction S-ubiquitinyl-[E2 ubiquitin-conjugating enzyme]-L-cysteine + [acceptor protein]-L-lysine = [E2 ubiquitin-conjugating enzyme]-L-cysteine + N(6)-ubiquitinyl-[acceptor protein]-L-lysine.. Functionally, E3 ubiquitin ligase that ubiquitinates APBB1 for its degradation by the proteasome and thus prevents apoptosis and promotes survival of neurons. Has a dual role in neurons as it is also required for dendrite growth and maintenance for which its ligase activity is not critical. May act as a scaffold molecule to regulate this process. Acts as a downstream effector of the interconnected PI3K and MAPK signaling pathways and thus participates in the regulation of the cell cycle. This is E3 ubiquitin ligase Rnf157 (Rnf157) from Mus musculus (Mouse).